The following is a 292-amino-acid chain: 33 kDa chaperonin (292 aa).

Cystine bridges form between cysteine 230–cysteine 232 and cysteine 263–cysteine 266.

This sequence belongs to the HSP33 family. In terms of processing, under oxidizing conditions two disulfide bonds are formed involving the reactive cysteines. Under reducing conditions zinc is bound to the reactive cysteines and the protein is inactive.

It is found in the cytoplasm. Redox regulated molecular chaperone. Protects both thermally unfolding and oxidatively damaged proteins from irreversible aggregation. Plays an important role in the bacterial defense system toward oxidative stress. The chain is 33 kDa chaperonin from Sodalis glossinidius (strain morsitans).